The primary structure comprises 254 residues: Transmembrane protein 269 (254 aa).

The next 5 helical transmembrane spans lie at 44 to 64, 69 to 89, 113 to 135, 171 to 191, and 210 to 230; these read IINA…FCSF, YCAS…GTMT, LASA…IYVL, LTKG…LFMI, and IVYI…TAFY.

It localises to the membrane. This is Transmembrane protein 269 from Mus musculus (Mouse).